The following is a 553-amino-acid chain: Flagellar hook-associated protein 1 (553 aa).

It belongs to the flagella basal body rod proteins family.

The protein resides in the secreted. It is found in the bacterial flagellum. The sequence is that of Flagellar hook-associated protein 1 (flgK) from Salmonella typhi.